Reading from the N-terminus, the 251-residue chain is Flap endonuclease Xni (251 aa).

Mg(2+) is bound at residue Asp104. Positions 160 to 249 (VQPQQLPDYW…IDGNLQQLRL (90 aa)) constitute a 5'-3' exonuclease domain. Positions 171, 172, 180, 182, and 185 each coordinate K(+). Residues 184–189 (GIGPKS) form an interaction with DNA region.

Belongs to the Xni family. Mg(2+) is required as a cofactor. Requires K(+) as cofactor.

In terms of biological role, has flap endonuclease activity. During DNA replication, flap endonucleases cleave the 5'-overhanging flap structure that is generated by displacement synthesis when DNA polymerase encounters the 5'-end of a downstream Okazaki fragment. The chain is Flap endonuclease Xni from Escherichia coli O81 (strain ED1a).